A 167-amino-acid polypeptide reads, in one-letter code: Thioredoxin Y2, chloroplastic (167 aa).

Residues 1–58 constitute a chloroplast transit peptide; the sequence is MAISLATAYISPCFTPESSNSASPSRTLSSVRLPSQIRRFGSVQSPSSSTRFAPLTVR. One can recognise a Thioredoxin domain in the interval 59-164; the sequence is AAKKQTFNSF…LVERIENSLQ (106 aa). Catalysis depends on nucleophile residues C88 and C91. Cysteines 88 and 91 form a disulfide.

Belongs to the thioredoxin family. Plant Y-type subfamily. As to expression, expressed in leaves.

Its subcellular location is the plastid. The protein localises to the chloroplast stroma. Thiol-disulfide oxidoreductase that poorly activates chloroplastic malate dehydrogenase (NADP-MDH) and fructose-1,6-bisphosphatase. Provides reducing equivalents for peroxiredoxin Q. This is Thioredoxin Y2, chloroplastic from Arabidopsis thaliana (Mouse-ear cress).